The sequence spans 126 residues: VEGSLVQFETMIMKLAKRSGFFWYSFYGCYCGWGGHGLPQDPTDRCCFVHDCCYGKVTNCNPKTATYSYTEENDGIVCGGDDPCKKQVCECDRVAAMCFRDNKDTYDSDKYWKLPPQKCQEDPEPC.

A signal peptide spans 1 to 3 (VEG). 7 disulfide bridges follow: Cys29–Cys119, Cys31–Cys47, Cys46–Cys98, Cys52–Cys126, Cys53–Cys91, Cys60–Cys84, and Cys78–Cys89. Tyr30, Gly32, and Gly34 together coordinate Ca(2+). His50 is an active-site residue. Residue Asp51 participates in Ca(2+) binding. Asp92 is an active-site residue.

As to quaternary structure, homodimer. It depends on Ca(2+) as a cofactor. As to expression, expressed by the venom gland.

It localises to the secreted. It catalyses the reaction a 1,2-diacyl-sn-glycero-3-phosphocholine + H2O = a 1-acyl-sn-glycero-3-phosphocholine + a fatty acid + H(+). In terms of biological role, snake venom phospholipase A2 (PLA2) that inhibits ADP-induced platelet aggregation. PLA2 catalyzes the calcium-dependent hydrolysis of the 2-acyl groups in 3-sn-phosphoglycerides. The polypeptide is Acidic phospholipase A2 S1E6-a (Calloselasma rhodostoma (Malayan pit viper)).